Here is a 1280-residue protein sequence, read N- to C-terminus: Dynactin subunit 1 (1280 aa).

The segment at 1-26 (MAQSKRHMYNRTPSGSRMSTEASARP) is disordered. The span at 11–22 (RTPSGSRMSTEA) shows a compositional bias: polar residues. A CAP-Gly domain is found at 48–90 (GATLFATGKWVGVILDEAKGKNDGTVQGRKYFTCDEGHGIFVR). The disordered stretch occupies residues 99–223 (DGADTTSPET…SKEEEGLRDQ (125 aa)). Positions 102 to 114 (DTTSPETPDSSAS) are enriched in polar residues. A phosphothreonine mark is found at Thr-108, Thr-145, Thr-146, and Thr-147. Positions 129–152 (SKLRGLKPKKAPTARKTTTRRPKP) are enriched in basic residues. The segment covering 161-205 (AGPSSSLGPSGSASAGELSSSEPSTPAQTPLAAPIIPTPALTSPG) has biased composition (low complexity). A Phosphoserine; by PLK1 modification is found at Ser-179. At Ser-212 the chain carries Phosphoserine; by CDK1. Residues 214-223 (SKEEEGLRDQ) show a composition bias toward basic and acidic residues. 2 coiled-coil regions span residues 214–513 (SKEE…ADYQ) and 942–1048 (LKLE…EGLR). An interaction with HPS6 region spans residues 910-1280 (EYDAERPPSK…LHQLHGRLIS (371 aa)). The tract at residues 1064–1089 (GEEQQRGGTPGQAPGALPGPGPVKDS) is disordered. Positions 1184–1213 (SAQLMEQVAQLKSLSDTIEKLKDEVLKETV) form a coiled coil.

The protein belongs to the dynactin 150 kDa subunit family. In terms of assembly, monomer and homodimer. Subunit of dynactin, a multiprotein complex part of a tripartite complex with dynein and a adapter, such as BICDL1, BICD2 or HOOK3. The dynactin complex is built around ACTR1A/ACTB filament and consists of an actin-related filament composed of a shoulder domain, a pointed end and a barbed end. Its length is defined by its flexible shoulder domain. The soulder is composed of 2 DCTN1 subunits, 4 DCTN2 and 2 DCTN3. DCTN1/p150(glued) binds directly to microtubules and to cytoplasmic dynein. The 4 DCNT2 (via N-terminus) bind the ACTR1A filament and act as molecular rulers to determine the length. The pointed end is important for binding dynein-dynactin cargo adapters. Consists of 4 subunits: ACTR10, DCNT4, DCTN5 and DCTN6. The barbed end is composed of a CAPZA1:CAPZB heterodimers, which binds ACTR1A/ACTB filament and dynactin and stabilizes dynactin. Interacts with the C-terminus of MAPRE1, MAPRE2 and MAPRE3. Interacts (via C-terminus) with SNX6. Interacts with CLN3, DYNAP, ECPAS and FBXL5. Interacts with MISP; this interaction regulates its distribution at the cell cortex. Interacts with CEP131. Interacts with CEP126. Interacts with CLIP1. Interacts with dynein intermediate chain and dynein heavy chain. Interacts with PLK1 (via POLO-box domain). Interacts with TBCB. Binds preferentially to tyrosinated microtubules than to detyrosinated microtubules. Interacts with PARD6A. Interacts with HPS6. Interacts with KIF3A. Interacts with BICD2. Interacts with DST (isoform 9). Interacts with DST (isoform 1). Identified in a complex with MREG and RILP. Interacts with BCCIP (isoform 2/alpha). Interacts with DCDC1. Interacts with AKNA. Interacts with DYNC1I2. Interacts with RUFY3 and RUFY4. Ubiquitinated by a SCF complex containing FBXL5, leading to its degradation by the proteasome. Post-translationally, phosphorylation by SLK at Thr-145, Thr-146 and Thr-147 targets DCTN1 to the centrosome. It is uncertain if SLK phosphorylates all three threonines or one or two of them. PLK1-mediated phosphorylation at Ser-179 is essential for its localization in the nuclear envelope and promotes its dissociation from microtubules during early mitosis and positively regulates nuclear envelope breakdown during prophase. In terms of tissue distribution, ubiquitous with a high level expression observed in the brain (at protein level).

It localises to the cytoplasm. The protein resides in the cytoskeleton. It is found in the microtubule organizing center. The protein localises to the centrosome. Its subcellular location is the centriole. It localises to the spindle. The protein resides in the nucleus envelope. It is found in the cell cortex. Its function is as follows. Part of the dynactin complex that activates the molecular motor dynein for ultra-processive transport along microtubules. Plays a key role in dynein-mediated retrograde transport of vesicles and organelles along microtubules by recruiting and tethering dynein to microtubules. Binds to both dynein and microtubules providing a link between specific cargos, microtubules and dynein. Essential for targeting dynein to microtubule plus ends, recruiting dynein to membranous cargos and enhancing dynein processivity (the ability to move along a microtubule for a long distance without falling off the track). Can also act as a brake to slow the dynein motor during motility along the microtubule. Can regulate microtubule stability by promoting microtubule formation, nucleation and polymerization and by inhibiting microtubule catastrophe in neurons. Inhibits microtubule catastrophe by binding both to microtubules and to tubulin, leading to enhanced microtubule stability along the axon. Plays a role in metaphase spindle orientation. Plays a role in centriole cohesion and subdistal appendage organization and function. Its recruitment to the centriole in a KIF3A-dependent manner is essential for the maintenance of centriole cohesion and the formation of subdistal appendage. Also required for microtubule anchoring at the mother centriole. Plays a role in primary cilia formation. The polypeptide is Dynactin subunit 1 (Dctn1) (Rattus norvegicus (Rat)).